Reading from the N-terminus, the 413-residue chain is Protein esc1 (413 aa).

Positions 1-22 (MSSYALPSMQPTPTSSIPLRQM) are enriched in polar residues. Disordered stretches follow at residues 1–202 (MSSY…NQPS) and 230–265 (MYVP…YSQG). Over residues 23-42 (SQPTTSAPSNSASSTPYSPQ) the composition is skewed to low complexity. Residues 43–63 (QVPLTHNSYPLSTPSSFQHGQ) show a composition bias toward polar residues. 2 stretches are compositionally biased toward low complexity: residues 86–103 (SAAP…STAA) and 116–126 (SSSSYVYSVPP). The span at 127-136 (TNSTTSQASA) shows a compositional bias: polar residues. Residues 150–197 (STTLTPSTTDSSSTDVSSSDSVSTSASSSNASNTVSVTSPASSSATPL) are compositionally biased toward low complexity. Residues 334–385 (ELRTSHKLAERKRRKEIKELFDDLKDALPLDKSTKSSKWGLLTRAIQYIEQL) enclose the bHLH domain.

Efficient DNA binding requires dimerization with another bHLH protein.

Its subcellular location is the nucleus. In terms of biological role, involved in the sexual differentiation process. Modulate the ability of the cell to differentiate in response to the nitrogen starvation signal; in particular in response to decreases in the level of cellular cAMP. This chain is Protein esc1 (esc1), found in Schizosaccharomyces pombe (strain 972 / ATCC 24843) (Fission yeast).